Reading from the N-terminus, the 358-residue chain is Phosphoribosylformylglycinamidine cyclo-ligase (358 aa).

It belongs to the AIR synthase family.

Its subcellular location is the cytoplasm. It catalyses the reaction 2-formamido-N(1)-(5-O-phospho-beta-D-ribosyl)acetamidine + ATP = 5-amino-1-(5-phospho-beta-D-ribosyl)imidazole + ADP + phosphate + H(+). Its pathway is purine metabolism; IMP biosynthesis via de novo pathway; 5-amino-1-(5-phospho-D-ribosyl)imidazole from N(2)-formyl-N(1)-(5-phospho-D-ribosyl)glycinamide: step 2/2. The protein is Phosphoribosylformylglycinamidine cyclo-ligase of Chromohalobacter salexigens (strain ATCC BAA-138 / DSM 3043 / CIP 106854 / NCIMB 13768 / 1H11).